A 164-amino-acid polypeptide reads, in one-letter code: MRVRFCTKGNLILVIIEDVEESIEWKTLQKKKQQKIKEKLRIRTKAAVKIQAWWRGTLVRRTLLHAALRAWIIQCWWRMTLSRVLEKKRQAALIAYATRERAVIKLQSLVRMWRVRWRYCQVLNAIYIIQGHWQCHNCQTCALLQGHCVVTATHLQFHIEIINS.

2 IQ domains span residues 43–72 and 99–128; these read RTKAAVKIQAWWRGTLVRRTLLHAALRAWI and RERAVIKLQSLVRMWRVRWRYCQVLNAIYI.

The sequence is that of IQ domain-containing protein F2 (IQCF2) from Homo sapiens (Human).